Reading from the N-terminus, the 379-residue chain is Transcription termination factor 1b, mitochondrial (379 aa).

The N-terminal 37 residues, 1-37 (MASRNIWCVRRNFLFDLRGWMLQYSAEVFLKSISFRT), are a transit peptide targeting the mitochondrion. Interaction with DNA regions lie at residues 151–152 (RS), 229–233 (QSTKR), 306–313 (SEKKFNDK), 337–340 (SINT), and 366–373 (SQRRYEAK).

This sequence belongs to the mTERF family. In terms of assembly, monomer. In terms of processing, phosphoprotein with mostly four phosphate groups. While the DNA-binding activity is unaffected by the phosphorylation state, only the phosphorylated form of the protein is active for termination activity. Functioning seems to be regulated by phosphorylation. As to expression, expressed strongly in the heart and at lower levels in brain, liver and kidney.

The protein resides in the mitochondrion. Functionally, transcription termination factor. Binds to a 28 bp region within the tRNA(Leu(uur)) gene at a position immediately adjacent to and downstream of the 16S rRNA gene; this region comprises a tridecamer sequence critical for directing accurate termination. Binds DNA along the major grove and promotes DNA bending and partial unwinding. Promotes base flipping. Transcription termination activity appears to be polarized with highest specificity for transcripts initiated on the light strand. In Mus musculus (Mouse), this protein is Transcription termination factor 1b, mitochondrial.